The chain runs to 796 residues: Inactive dipeptidyl peptidase 10 (796 aa).

Topologically, residues 1–34 (MNQTASVSHHIKCQPSKTIKELGSNSPPQRNWKG) are cytoplasmic. The interval 1–55 (MNQTASVSHHIKCQPSKTIKELGSNSPPQRNWKGIAIALLVILVVCSLITMSVIL) is mediates effects on KCND2. Residues 35-55 (IAIALLVILVVCSLITMSVIL) traverse the membrane as a helical; Signal-anchor for type II membrane protein segment. The Extracellular segment spans residues 56-796 (LTPDELTNSS…VLPQEPEEDE (741 aa)). N-linked (GlcNAc...) asparagine glycans are attached at residues Asn-63, Asn-90, Asn-111, and Asn-119. Phosphotyrosine occurs at positions 138 and 143. N-linked (GlcNAc...) asparagine glycosylation is found at Asn-257, Asn-342, and Asn-748.

It belongs to the peptidase S9B family. DPPIV subfamily. As to quaternary structure, may form oligomers. Interacts with KCND1. Interacts with KCND2. Identified in a complex with KCND2 and KCNIP3. In terms of processing, N-glycosylation is important for cell surface expression, specially at Asn-257, which is crucial. As to expression, detected in brain cortex, hippocampus, thalamus and cerebellum Purkinje cells (at protein level).

It localises to the cell membrane. Its function is as follows. Promotes cell surface expression of the potassium channel KCND2. Modulates the activity and gating characteristics of the potassium channel KCND2. Has no dipeptidyl aminopeptidase activity. This is Inactive dipeptidyl peptidase 10 (Dpp10) from Rattus norvegicus (Rat).